The chain runs to 152 residues: UPF0266 membrane protein YobD (152 aa).

A run of 3 helical transmembrane segments spans residues 6–26 (LVLI…QFIM), 45–65 (IDSV…VTNH), and 67–87 (AQIT…IFWI).

Belongs to the UPF0266 family.

Its subcellular location is the cell inner membrane. The sequence is that of UPF0266 membrane protein YobD from Escherichia fergusonii (strain ATCC 35469 / DSM 13698 / CCUG 18766 / IAM 14443 / JCM 21226 / LMG 7866 / NBRC 102419 / NCTC 12128 / CDC 0568-73).